The primary structure comprises 654 residues: MLAAKNILNRSSLSSSFRIATRLQSTKVQGSVIGIDLGTTNSAVAIMEGKVPKIIENAEGSRTTPSVVAFTKEGERLVGIPAKRQAVVNPENTLFATKRLIGRRFEDAEVQRDIKQVPYKIVKHSNGDAWVEARGQTYSPAQIGGFVLNKMKETAEAYLGKPVKNAVVTVPAYFNDSQRQATKDAGQIVGLNVLRVVNEPTAAALAYGLEKSDSKVVAVFDLGGGTFDISILDIDNGVFEVKSTNGDTHLGGEDFDIYLLREIVSRFKTETGIDLENDRMAIQRIREAAEKAKIELSSTVSTEINLPFITADASGPKHINMKFSRAQFETLTAPLVKRTVDPVKKALKDAGLSTSDISEVLLVGGMSRMPKVVETVKSLFGKDPSKAVNPDEAVAIGAAVQGAVLSGEVTDVLLLDVTPLSLGIETLGGVFTRLIPRNTTIPTKKSQIFSTAAAGQTSVEIRVFQGERELVRDNKLIGNFTLAGIPPAPKGVPQIEVTFDIDADGIINVSARDKATNKDSSITVAGSSGLSENEIEQMVNDAEKFKSQDEARKQAIETANKADQLANDTENSLKEFEGKVDKAEAQKVRDQITSLKELVARVQGGEEVNAEELKTKTEELQTSSMKLFEQLYKNDSNNNNNNNGNNAESGETKQ.

Residues 1-23 (MLAAKNILNRSSLSSSFRIATRL) constitute a mitochondrion transit peptide. Phosphothreonine is present on Thr-330. Positions 629 to 654 (EQLYKNDSNNNNNNNGNNAESGETKQ) are disordered. Residues 637–646 (NNNNNNNGNN) show a composition bias toward low complexity.

The protein belongs to the heat shock protein 70 family. As to quaternary structure, component of the PAM complex, at least composed of SSC1 (mtHsp70), MGE1, TIM44, PAM16/TIM16, PAM17 and PAM18/TIM14. In the complex, SSC1 interacts directly with PAM18 and TIM44. Interacts with NAP1.

The protein resides in the mitochondrion matrix. The enzyme catalyses ATP + H2O = ADP + phosphate + H(+). Essential component of the PAM complex, a complex required for the translocation of transit peptide-containing proteins from the inner membrane into the mitochondrial matrix in an ATP-dependent manner. Constitutes the ATP-driven core of the motor and binds the precursor preprotein. Required for the import of the processed frataxin homolog YFH1 into the mitochondrion. The chain is Import motor subunit, mitochondrial from Saccharomyces cerevisiae (strain ATCC 204508 / S288c) (Baker's yeast).